A 237-amino-acid chain; its full sequence is NADPH-dependent FMN reductase ArsH (237 aa).

Residues 39–46 and 102–107 each bind FMN; these read SNRECSYS and SPERHG.

It belongs to the ArsH family. In terms of assembly, homotetramer. Requires FMN as cofactor.

Its function is as follows. Has NADPH-dependent FMN reductase activity and high NADPH-dependent ferric reductase activity with highest activity for Fe(3+) as substrate. No activity with NADH, iron trichloride, Cu(2+) or Ag(+). May be involved in cytosolic ferric iron assimilation as an NADPH-dependent ferric reductase in vivo. This Acidithiobacillus ferrooxidans (strain ATCC 23270 / DSM 14882 / CIP 104768 / NCIMB 8455) (Ferrobacillus ferrooxidans (strain ATCC 23270)) protein is NADPH-dependent FMN reductase ArsH.